A 514-amino-acid polypeptide reads, in one-letter code: Serine/threonine-protein kinase 33 (514 aa).

Residues 65–86 (INRDITSRKDLPSRTSNVERKA) show a composition bias toward basic and acidic residues. Positions 65-91 (INRDITSRKDLPSRTSNVERKASQQQW) are disordered. Positions 116–381 (YTFGRILGKG…AKELLDNQWL (266 aa)) constitute a Protein kinase domain. ATP-binding positions include 122–130 (LGKGSFGIV) and lysine 145. The Proton acceptor role is filled by aspartate 238. Disordered stretches follow at residues 402 to 468 (KNNP…DMCS) and 485 to 514 (MEKT…KKKL). Position 407 is a phosphoserine (serine 407). Residues 413–426 (TEEKNKPSTEEKLK) are compositionally biased toward basic and acidic residues. Over residues 449-468 (STAYEKQFPATSKDNFDMCS) the composition is skewed to polar residues.

It belongs to the protein kinase superfamily. CAMK Ser/Thr protein kinase family. CaMK subfamily. As to quaternary structure, homodimer. Post-translationally, autophosphorylated. As to expression, highly expressed in testis, fetal lung and heart, followed by pituitary gland, kidney, interventricular septum, pancreas, heart, trachea, thyroid gland and uterus. Weak hybridization signals were observed in the following tissues: amygdala, aorta, esophagus, colon ascending, colon transverse, skeletal muscle, spleen, peripheral blood leukocyte, lymph node, bone marrow, placenta, prostate, liver, salivary gland, mammary gland, some tumor cell lines, fetal brain, fetal liver, fetal spleen and fetal thymus. No signal at all was detectable in RNA from tissues of the nervous system.

The protein localises to the cytoplasm. The protein resides in the cytoskeleton. It is found in the perinuclear region. It catalyses the reaction L-seryl-[protein] + ATP = O-phospho-L-seryl-[protein] + ADP + H(+). The catalysed reaction is L-threonyl-[protein] + ATP = O-phospho-L-threonyl-[protein] + ADP + H(+). Specifically inhibited by CDD-2807 ((3-([1,1'-Biphenyl]-2-ylethynyl)-1H-indazol-5-yl)(2,6-diazaspiro[3.5]nonan-2-yl)methanone). Serine/threonine protein kinase required for spermatid differentiation and male fertility. Promotes sperm flagella assembly during spermatogenesis by mediating phosphorylation of fibrous sheath proteins AKAP3 and AKAP4. Also phosphorylates vimentin/VIM, thereby regulating the dynamic behavior of the intermediate filament cytoskeleton. This chain is Serine/threonine-protein kinase 33, found in Homo sapiens (Human).